A 251-amino-acid polypeptide reads, in one-letter code: Flap endonuclease Xni (251 aa).

D104 lines the Mg(2+) pocket. Residues 160–249 (VQPQQLPDYW…IDGNLQQLRL (90 aa)) form the 5'-3' exonuclease domain. K(+) is bound by residues L171, A172, P180, V182, and I185. The interaction with DNA stretch occupies residues 184 to 189 (GIGPKS).

It belongs to the Xni family. The cofactor is Mg(2+). K(+) is required as a cofactor.

Its function is as follows. Has flap endonuclease activity. During DNA replication, flap endonucleases cleave the 5'-overhanging flap structure that is generated by displacement synthesis when DNA polymerase encounters the 5'-end of a downstream Okazaki fragment. This Escherichia coli O45:K1 (strain S88 / ExPEC) protein is Flap endonuclease Xni.